The following is a 404-amino-acid chain: tRNA (carboxymethyluridine(34)-5-O)-methyltransferase (404 aa).

Position 238 is a phosphoserine (Ser-238).

Interacts with TRM112A and TRM112B.

The catalysed reaction is 5-(carboxymethyl)uridine(34) in tRNA + S-adenosyl-L-methionine = 5-(2-methoxy-2-oxoethyl)uridine(34) in tRNA + S-adenosyl-L-homocysteine. Functionally, catalyzes the methylation of 5-carboxymethyl uridine to 5-methylcarboxymethyl uridine at the wobble position of the anticodon loop in tRNA via its methyltransferase domain. Catalyzes the last step in the formation of 5-methylcarboxymethyl uridine at the wobble position of the anticodon loop in target tRNA. This Arabidopsis thaliana (Mouse-ear cress) protein is tRNA (carboxymethyluridine(34)-5-O)-methyltransferase.